We begin with the raw amino-acid sequence, 1183 residues long: Rab11 family-interacting protein 3 (1183 aa).

The tract at residues 423-448 (AEDPSTESLPRKNGQEESKSALPVST) is disordered. A compositionally biased stretch (basic and acidic residues) spans 431–441 (LPRKNGQEESK). 2 EF-hand domains span residues 706-741 (EEQSALRAVFQALDQDGDGFVHIEEFIEFAKAYGAE) and 738-773 (YGAEQVKDLTRFLDPSGLGVISFEDFHRGISAISNE). 7 residues coordinate Ca(2+): aspartate 719, aspartate 721, aspartate 723, glutamate 730, aspartate 751, serine 753, and aspartate 762. Residues 902 to 1121 (ELEKDSLESE…NGQIINLSIQ (220 aa)) are a coiled coil. Positions 911 to 1015 (EEQHARLRQE…LQDEADDITQ (105 aa)) are ARF-binding domain (ABD). The tract at residues 1005–1044 (KLQDEADDITQRLNEESESRRKMSDKLSHERHTNQKEKEC) is disordered. Positions 1121 to 1183 (QGAKSLFTES…ESNPSILEVK (63 aa)) constitute an FIP-RBD domain.

It is found in the recycling endosome membrane. Its subcellular location is the cytoplasm. The protein localises to the cytoskeleton. It localises to the microtubule organizing center. The protein resides in the centrosome. It is found in the cleavage furrow. Its subcellular location is the midbody. The protein localises to the golgi apparatus membrane. It localises to the golgi apparatus. The protein resides in the trans-Golgi network membrane. In terms of biological role, downstream effector molecule for Rab11 GTPase which acts as a regulator of endocytic trafficking, cytokinesis and intracellular ciliogenesis by participating in membrane delivery. The protein is Rab11 family-interacting protein 3 (rab11fip3) of Danio rerio (Zebrafish).